Consider the following 548-residue polypeptide: DNA-binding protein REPIN1 (548 aa).

The tract at residues 1 to 47 is disordered; it reads MLERRCRGPTAMGPAHPWLFSGPSQESSQPNRGLRYQGKSVAQPGGP. Polar residues predominate over residues 22 to 31; that stretch reads GPSQESSQPN. Phosphoserine is present on Ser27. An N6-acetyllysine modification is found at Lys39. The C2H2-type 1; atypical zinc-finger motif lies at 53 to 75; the sequence is HRCAHCRKRFPGWVALWLHTRRC. C2H2-type zinc fingers lie at residues 81–103 and 112–134; these read LPCH…LQVH and FICH…LRAH. The C2H2-type 4; atypical zinc finger occupies 141–163; sequence ITCPECNKRFWRQKQLRAHLRRC. 11 consecutive C2H2-type zinc fingers follow at residues 173 to 195, 232 to 254, 260 to 282, 288 to 310, 356 to 378, 384 to 406, 412 to 434, 440 to 462, 468 to 490, 496 to 518, and 524 to 546; these read FICG…KRVH, FQCA…RRVH, HQCP…RRIH, YPCT…SKIH, HSCT…QRQH, FTCT…SRVH, FACE…RRDH, FVCP…RRIH, YVCP…RRIH, YACP…RKSH, and FCCA…QKKH. At Lys272 the chain carries N6-acetyllysine.

As to quaternary structure, homodimers and homomultimers. Found in a complex with RIP60 and RIP100. In terms of tissue distribution, expressed in the liver and in subcutaneous and visceral adipose tissue.

The protein localises to the nucleus. The protein resides in the cytoplasm. Its subcellular location is the cytosol. In terms of biological role, sequence-specific double-stranded DNA-binding protein. Binds ATT-rich and T-rich DNA sequences and facilitates DNA bending. May regulate the expression of genes involved in cellular fatty acid import, including SCARB1/CD36, and genes involved in lipid droplet formation. May regulate the expression of LCN2, and thereby influence iron metabolism and apoptosis-related pathways. May regulate the expression of genes involved in glucose transport. The protein is DNA-binding protein REPIN1 (Repin1) of Rattus norvegicus (Rat).